Here is a 314-residue protein sequence, read N- to C-terminus: Vacuolar membrane protein SCRG_03194 (314 aa).

Residues 32-60 (KPTSSVVSETSSKSLPSLTSSAFSTSSGA) form a disordered region. Residues 93–113 (VYIAVGAVIGAIFISILIWWL) form a helical membrane-spanning segment. Phosphoserine occurs at positions 148, 254, and 274. Residues 240–309 (EERKLNLNRP…PSMFLDDVLN (70 aa)) form a disordered region. Residues 254–269 (SPERKEKKINSMEGYH) show a composition bias toward basic and acidic residues.

It belongs to the PRM5 family.

Its subcellular location is the vacuole membrane. This chain is Vacuolar membrane protein SCRG_03194, found in Saccharomyces cerevisiae (strain RM11-1a) (Baker's yeast).